A 140-amino-acid polypeptide reads, in one-letter code: Acyl carrier protein 1, chloroplastic (140 aa).

The transit peptide at 1-56 (MASAAAGASICIKSASFSPLAPGRISSLRSVSLPVSRKSFPSLKSSKSSFALRVSC) directs the protein to the chloroplast. One can recognise a Carrier domain in the interval 60 to 135 (PETVAKVCGI…DAADLIEKLM (76 aa)). S95 is subject to O-(pantetheine 4'-phosphoryl)serine.

Belongs to the acyl carrier protein (ACP) family. In terms of processing, 4'-phosphopantetheine is transferred from CoA to a specific serine of apo-ACP by acpS. This modification is essential for activity because fatty acids are bound in thioester linkage to the sulfhydryl of the prosthetic group.

It localises to the plastid. The protein resides in the chloroplast. It functions in the pathway lipid metabolism; fatty acid biosynthesis. In terms of biological role, carrier of the growing fatty acid chain in fatty acid biosynthesis. This is Acyl carrier protein 1, chloroplastic (ACL1.1) from Cuphea lanceolata (Cigar flower).